A 327-amino-acid polypeptide reads, in one-letter code: Glycerol-3-phosphate acyltransferase (327 aa).

5 helical membrane passes run 3-23 (SLLW…LLFA), 52-72 (VGVL…AVAL), 78-98 (TVFH…SCFL), 112-132 (VFLP…LAVI), and 152-172 (MLLL…MVLV). Disordered regions lie at residues 184–212 (SRGE…EAAA) and 233–327 (PSTE…SSGQ). Positions 199 to 212 (AQGTDAGAAPEAAA) are enriched in low complexity. The span at 237–246 (AAPSQETSDA) shows a compositional bias: polar residues. Positions 259 to 271 (EGDKRENEEHDNA) are enriched in basic and acidic residues.

Belongs to the PlsY family. As to quaternary structure, probably interacts with PlsX.

It localises to the cell inner membrane. The catalysed reaction is an acyl phosphate + sn-glycerol 3-phosphate = a 1-acyl-sn-glycero-3-phosphate + phosphate. It participates in lipid metabolism; phospholipid metabolism. Functionally, catalyzes the transfer of an acyl group from acyl-phosphate (acyl-PO(4)) to glycerol-3-phosphate (G3P) to form lysophosphatidic acid (LPA). This enzyme utilizes acyl-phosphate as fatty acyl donor, but not acyl-CoA or acyl-ACP. This is Glycerol-3-phosphate acyltransferase from Nitratidesulfovibrio vulgaris (strain ATCC 29579 / DSM 644 / CCUG 34227 / NCIMB 8303 / VKM B-1760 / Hildenborough) (Desulfovibrio vulgaris).